The following is a 713-amino-acid chain: Signal transducer and activator of transcription 1 (713 aa).

Positions 477–574 (WCIGFISKHD…EEMLRYFESE (98 aa)) constitute an SH2 domain.

The protein belongs to the transcription factor STAT family. Forms a homodimer or a heterodimer with a related family member.

Its subcellular location is the cytoplasm. It localises to the nucleus. Carries out a dual function: signal transduction and activation of transcription. Activated STAT proteins play a role in repression of dauer formation. Neuronal expression is held in check by negative signals through the TGF-beta pathway that target the daf-3 transcription factor. The chain is Signal transducer and activator of transcription 1 from Caenorhabditis briggsae.